Consider the following 384-residue polypeptide: S-adenosylmethionine synthase (384 aa).

Histidine 15 contacts ATP. A Mg(2+)-binding site is contributed by aspartate 17. Glutamate 43 is a binding site for K(+). Residues glutamate 56 and glutamine 99 each coordinate L-methionine. The interval 99-109 (QSADINQGVDR) is flexible loop. Residues 164–166 (DAK), 230–231 (RF), aspartate 239, 245–246 (RK), alanine 262, and lysine 266 contribute to the ATP site. Aspartate 239 is a binding site for L-methionine. Lysine 270 is an L-methionine binding site.

This sequence belongs to the AdoMet synthase family. Homotetramer; dimer of dimers. The cofactor is Mg(2+). K(+) serves as cofactor.

It localises to the cytoplasm. It carries out the reaction L-methionine + ATP + H2O = S-adenosyl-L-methionine + phosphate + diphosphate. It participates in amino-acid biosynthesis; S-adenosyl-L-methionine biosynthesis; S-adenosyl-L-methionine from L-methionine: step 1/1. Catalyzes the formation of S-adenosylmethionine (AdoMet) from methionine and ATP. The overall synthetic reaction is composed of two sequential steps, AdoMet formation and the subsequent tripolyphosphate hydrolysis which occurs prior to release of AdoMet from the enzyme. This is S-adenosylmethionine synthase from Haemophilus influenzae (strain PittEE).